Reading from the N-terminus, the 322-residue chain is Porphobilinogen deaminase (322 aa).

Cys252 is subject to S-(dipyrrolylmethanemethyl)cysteine.

Belongs to the HMBS family. Monomer. Dipyrromethane is required as a cofactor.

The catalysed reaction is 4 porphobilinogen + H2O = hydroxymethylbilane + 4 NH4(+). Its pathway is porphyrin-containing compound metabolism; protoporphyrin-IX biosynthesis; coproporphyrinogen-III from 5-aminolevulinate: step 2/4. Its function is as follows. Tetrapolymerization of the monopyrrole PBG into the hydroxymethylbilane pre-uroporphyrinogen in several discrete steps. The chain is Porphobilinogen deaminase from Caulobacter vibrioides (strain ATCC 19089 / CIP 103742 / CB 15) (Caulobacter crescentus).